The sequence spans 295 residues: ATP synthase gamma chain (295 aa).

This sequence belongs to the ATPase gamma chain family. In terms of assembly, F-type ATPases have 2 components, CF(1) - the catalytic core - and CF(0) - the membrane proton channel. CF(1) has five subunits: alpha(3), beta(3), gamma(1), delta(1), epsilon(1). CF(0) has three main subunits: a, b and c.

It localises to the cell membrane. Its function is as follows. Produces ATP from ADP in the presence of a proton gradient across the membrane. The gamma chain is believed to be important in regulating ATPase activity and the flow of protons through the CF(0) complex. This Acetivibrio thermocellus (strain ATCC 27405 / DSM 1237 / JCM 9322 / NBRC 103400 / NCIMB 10682 / NRRL B-4536 / VPI 7372) (Clostridium thermocellum) protein is ATP synthase gamma chain.